A 1106-amino-acid polypeptide reads, in one-letter code: Probable ATP-citrate synthase (1106 aa).

Residues Asn358, Thr360, and Arg391 each coordinate citrate. Residues 442–459 (APQTTGQFLLSPERNTGG) are compositionally biased toward polar residues. Residues 442 to 478 (APQTTGQFLLSPERNTGGTERAPPSPAANATPTEHPL) form a disordered region. Residues 701-721 (VIRY…EVGG) and 752-778 (ITSE…KNAA) contribute to the ATP site. Glu718 contributes to the Mg(2+) binding site. The Tele-phosphohistidine intermediate role is filled by His760. 779 to 789 (LRASGALVPES) is a CoA binding site.

The protein in the N-terminal section; belongs to the succinate/malate CoA ligase beta subunit family. It in the C-terminal section; belongs to the succinate/malate CoA ligase alpha subunit family. Homotetramer.

It is found in the cytoplasm. It carries out the reaction oxaloacetate + acetyl-CoA + ADP + phosphate = citrate + ATP + CoA. Catalyzes the cleavage of citrate into oxaloacetate and acetyl-CoA, the latter serving as common substrate in multiple biochemical reactions in protein, carbohydrate and lipid metabolism. The polypeptide is Probable ATP-citrate synthase (Caenorhabditis elegans).